A 193-amino-acid polypeptide reads, in one-letter code: Ion-translocating oxidoreductase complex subunit A (193 aa).

6 helical membrane-spanning segments follow: residues L5–L25, I39–V59, F62–A82, L102–L122, A134–I154, and S171–V191.

Belongs to the NqrDE/RnfAE family. In terms of assembly, the complex is composed of six subunits: RnfA, RnfB, RnfC, RnfD, RnfE and RnfG.

It is found in the cell inner membrane. Part of a membrane-bound complex that couples electron transfer with translocation of ions across the membrane. The sequence is that of Ion-translocating oxidoreductase complex subunit A from Yersinia pestis bv. Antiqua (strain Nepal516).